The following is a 306-amino-acid chain: Phospho-N-acetylmuramoyl-pentapeptide-transferase (306 aa).

10 consecutive transmembrane segments (helical) span residues 1-21, 49-69, 75-95, 104-124, 130-150, 160-180, 182-202, 209-229, 234-254, and 284-304; these read MDIYSAATLLAEFVLGIIIFP, GTPTAGGIVFISLTVIAGLIL, LIFTLLFYGFIGFLDDFVSIV, AWQKLALQFLFSIWIAYTILQ, IFGITVPSWLFYLFTMLLVSG, GIDGLAGWVFVTSMIPFMFFS, SSMEYKAIFVIIMPLLSFLVY, VFMGDTGSLALGAYISTYALM, LSLLFFTPIFLLETISVILQV, and IVGVFSAWNLAIAIFYIAFFL.

This sequence belongs to the glycosyltransferase 4 family. MraY subfamily. Mg(2+) is required as a cofactor.

The protein localises to the cell inner membrane. It catalyses the reaction UDP-N-acetyl-alpha-D-muramoyl-L-alanyl-gamma-D-glutamyl-meso-2,6-diaminopimeloyl-D-alanyl-D-alanine + di-trans,octa-cis-undecaprenyl phosphate = di-trans,octa-cis-undecaprenyl diphospho-N-acetyl-alpha-D-muramoyl-L-alanyl-D-glutamyl-meso-2,6-diaminopimeloyl-D-alanyl-D-alanine + UMP. It participates in cell wall biogenesis; peptidoglycan biosynthesis. In terms of biological role, catalyzes the initial step of the lipid cycle reactions in the biosynthesis of the cell wall peptidoglycan: transfers peptidoglycan precursor phospho-MurNAc-pentapeptide from UDP-MurNAc-pentapeptide onto the lipid carrier undecaprenyl phosphate, yielding undecaprenyl-pyrophosphoryl-MurNAc-pentapeptide, known as lipid I. The chain is Phospho-N-acetylmuramoyl-pentapeptide-transferase from Fervidobacterium nodosum (strain ATCC 35602 / DSM 5306 / Rt17-B1).